Reading from the N-terminus, the 54-residue chain is UPF0391 membrane protein Tbd_2238 (54 aa).

The next 2 helical transmembrane spans lie at 5–25 (ALVF…GIAA) and 28–48 (VGIA…TFVV).

This sequence belongs to the UPF0391 family.

Its subcellular location is the cell membrane. The sequence is that of UPF0391 membrane protein Tbd_2238 from Thiobacillus denitrificans (strain ATCC 25259 / T1).